A 451-amino-acid polypeptide reads, in one-letter code: Tubulin gamma-1 chain (451 aa).

Ser131 bears the Phosphoserine; by BRSK1 mark. 142–148 (AGGTGSG) provides a ligand contact to GTP.

The protein belongs to the tubulin family. As to quaternary structure, component of the gamma-tubulin ring complex (gTuRC) consisting of TUBGCP2, TUBGCP3, TUBGCP4, TUBGCP5 and TUBGCP6 and gamma-tubulin TUBG1 or TUBG2. TUBGCP2, TUBGCP3, TUBGCP4, TUBGCP5 and TUBGCP6 assemble in a 5:5:2:1:1 stoichiometry; each is associated with a gamma-tubulin, thereby arranging 14 gamma-tubulins in a helical manner. Gamma-tubulin at the first position is blocked by TUBGCP3 at the last position, allowing 13 protafilaments to grow into a microtubule. The gTuRC (via TUBGCP3 and TUBGCP6) interacts with ACTB and MZT1; the interactions form a luminal bridge that stabilizes the initial structure during complex assembly. The gTuRC (via TUBGCP2) interacts with MZT2A/MZT2B and CDK5RAP2 (via CM1 motif); the interactions play a role in gTuRC activation. Interacts with alpha-beta tubulin heterodimers; the interaction allows microtubules to nucleate from the gTuRC. Interacts with B9D2. Interacts with CDK5RAP2; the interaction is leading to centrosomal localization of TUBG1 and CDK5RAP2. Interacts with CIMAP3. Interacts with SAS6 and NUP62 at the centrosome. Interacts with EML3 (phosphorylated at 'Thr-881') and HAUS8. Interacts with DNM2; this interaction may participate in centrosome cohesion. Interacts with CCDC66. Post-translationally, phosphorylation at Ser-131 by BRSK1 regulates centrosome duplication, possibly by mediating relocation of gamma-tubulin and its associated proteins from the cytoplasm to the centrosome.

It localises to the cytoplasm. Its subcellular location is the cytoskeleton. The protein localises to the microtubule organizing center. It is found in the centrosome. The protein resides in the spindle. Tubulin is the major constituent of microtubules, protein filaments consisting of alpha- and beta-tubulin heterodimers. Gamma-tubulin is a key component of the gamma-tubulin ring complex (gTuRC) which mediates microtubule nucleation. The gTuRC regulates the minus-end nucleation of alpha-beta tubulin heterodimers that grow into microtubule protafilaments, a critical step in centrosome duplication and spindle formation. The sequence is that of Tubulin gamma-1 chain from Bos taurus (Bovine).